A 468-amino-acid polypeptide reads, in one-letter code: Putrescine aminotransferase (468 aa).

Residues 150-151 (GT) and Gln-274 contribute to the pyridoxal 5'-phosphate site. The residue at position 300 (Lys-300) is an N6-(pyridoxal phosphate)lysine. Thr-332 serves as a coordination point for pyridoxal 5'-phosphate.

It belongs to the class-III pyridoxal-phosphate-dependent aminotransferase family. Putrescine aminotransferase subfamily. Pyridoxal 5'-phosphate serves as cofactor.

The enzyme catalyses an alkane-alpha,omega-diamine + 2-oxoglutarate = an omega-aminoaldehyde + L-glutamate. It carries out the reaction putrescine + 2-oxoglutarate = 1-pyrroline + L-glutamate + H2O. The catalysed reaction is cadaverine + 2-oxoglutarate = 5-aminopentanal + L-glutamate. The protein operates within amine and polyamine degradation; putrescine degradation; 4-aminobutanal from putrescine (transaminase route): step 1/1. Its function is as follows. Catalyzes the aminotransferase reaction from putrescine to 2-oxoglutarate, leading to glutamate and 4-aminobutanal, which spontaneously cyclizes to form 1-pyrroline. This is the first step in one of two pathways for putrescine degradation, where putrescine is converted into 4-aminobutanoate (gamma-aminobutyrate or GABA) via 4-aminobutanal. Also functions as a cadaverine transaminase in a a L-lysine degradation pathway to succinate that proceeds via cadaverine, glutarate and L-2-hydroxyglutarate. In Pectobacterium atrosepticum (strain SCRI 1043 / ATCC BAA-672) (Erwinia carotovora subsp. atroseptica), this protein is Putrescine aminotransferase.